A 353-amino-acid chain; its full sequence is Methylthioribose-1-phosphate isomerase (353 aa).

Substrate contacts are provided by residues 51–53 (RGA), arginine 94, and glutamine 199. Aspartate 240 (proton donor) is an active-site residue. Residue 250-251 (NK) participates in substrate binding.

It belongs to the eIF-2B alpha/beta/delta subunits family. MtnA subfamily. As to quaternary structure, homodimer.

It catalyses the reaction 5-(methylsulfanyl)-alpha-D-ribose 1-phosphate = 5-(methylsulfanyl)-D-ribulose 1-phosphate. It functions in the pathway amino-acid biosynthesis; L-methionine biosynthesis via salvage pathway; L-methionine from S-methyl-5-thio-alpha-D-ribose 1-phosphate: step 1/6. Its function is as follows. Catalyzes the interconversion of methylthioribose-1-phosphate (MTR-1-P) into methylthioribulose-1-phosphate (MTRu-1-P). This chain is Methylthioribose-1-phosphate isomerase, found in Bacillus pumilus (strain SAFR-032).